The sequence spans 139 residues: Probable disulfide formation protein C 1 (139 aa).

The chain crosses the membrane as a helical span at residues 8 to 27 (EYALFTAWGASFIATLGSLY). Cys37 and Cys40 are oxidised to a cystine. 2 helical membrane-spanning segments follow: residues 42–61 (YQRI…VVKK) and 68–85 (YSLP…YHYV). Cys99 and Cys104 are disulfide-bonded. Residues 113–135 (GFVTIPFLALIGFITIAVCSFIV) traverse the membrane as a helical segment.

Belongs to the DsbB family. BdbC subfamily.

It is found in the cell membrane. Required for disulfide bond formation in some proteins. The polypeptide is Probable disulfide formation protein C 1 (bdbC1) (Bacillus anthracis).